Reading from the N-terminus, the 154-residue chain is uncharacterized protein (154 aa).

Positions 7 to 143 (RSELEKTAVQ…IFSFVGKAAD (137 aa)) constitute an HTH marR-type domain. Positions 57 to 80 (AGELGKKTGLSTGSVTALVDRLEK) form a DNA-binding region, H-T-H motif.

This is an uncharacterized protein from Bacillus subtilis (strain 168).